The sequence spans 531 residues: Putative F-box protein At2g02890 (531 aa).

The F-box domain occupies 141–188 (RHSSSLTNDLIEEILSRLHSKSVARFRCVSKQCASMFASPYFKKLFQT).

The protein is Putative F-box protein At2g02890 of Arabidopsis thaliana (Mouse-ear cress).